The following is a 242-amino-acid chain: Ribose-5-phosphate isomerase A (242 aa).

Residues 39 to 42, 95 to 98, and 108 to 111 contribute to the substrate site; these read SGST, DGAD, and KGGG. Glu-117 serves as the catalytic Proton acceptor. Residue Lys-135 participates in substrate binding.

The protein belongs to the ribose 5-phosphate isomerase family. In terms of assembly, homodimer.

It catalyses the reaction aldehydo-D-ribose 5-phosphate = D-ribulose 5-phosphate. It participates in carbohydrate degradation; pentose phosphate pathway; D-ribose 5-phosphate from D-ribulose 5-phosphate (non-oxidative stage): step 1/1. In terms of biological role, catalyzes the reversible conversion of ribose-5-phosphate to ribulose 5-phosphate. In Chlamydia trachomatis serovar D (strain ATCC VR-885 / DSM 19411 / UW-3/Cx), this protein is Ribose-5-phosphate isomerase A.